The chain runs to 459 residues: Serine--tRNA ligase (459 aa).

L-serine is bound at residue 254 to 256; it reads TAE. ATP-binding positions include 285–287 and Val-301; that span reads RKE. An L-serine-binding site is contributed by Glu-308. Residue 372–375 participates in ATP binding; sequence EMVS. Thr-408 is a binding site for L-serine.

This sequence belongs to the class-II aminoacyl-tRNA synthetase family. Type-1 seryl-tRNA synthetase subfamily. As to quaternary structure, homodimer. The tRNA molecule binds across the dimer.

Its subcellular location is the cytoplasm. It catalyses the reaction tRNA(Ser) + L-serine + ATP = L-seryl-tRNA(Ser) + AMP + diphosphate + H(+). The catalysed reaction is tRNA(Sec) + L-serine + ATP = L-seryl-tRNA(Sec) + AMP + diphosphate + H(+). It functions in the pathway aminoacyl-tRNA biosynthesis; selenocysteinyl-tRNA(Sec) biosynthesis; L-seryl-tRNA(Sec) from L-serine and tRNA(Sec): step 1/1. Functionally, catalyzes the attachment of serine to tRNA(Ser). Is also able to aminoacylate tRNA(Sec) with serine, to form the misacylated tRNA L-seryl-tRNA(Sec), which will be further converted into selenocysteinyl-tRNA(Sec). The sequence is that of Serine--tRNA ligase from Staphylothermus marinus (strain ATCC 43588 / DSM 3639 / JCM 9404 / F1).